The primary structure comprises 355 residues: Protein pelota homolog (355 aa).

It belongs to the eukaryotic release factor 1 family. Pelota subfamily. As to quaternary structure, monomer. A divalent metal cation is required as a cofactor.

Its subcellular location is the cytoplasm. In terms of biological role, may function in recognizing stalled ribosomes, interact with stem-loop structures in stalled mRNA molecules, and effect endonucleolytic cleavage of the mRNA. May play a role in the release non-functional ribosomes and degradation of damaged mRNAs. Has endoribonuclease activity. In Natronomonas pharaonis (strain ATCC 35678 / DSM 2160 / CIP 103997 / JCM 8858 / NBRC 14720 / NCIMB 2260 / Gabara) (Halobacterium pharaonis), this protein is Protein pelota homolog.